A 102-amino-acid polypeptide reads, in one-letter code: Protein translation factor SUI1 homolog (102 aa).

Belongs to the SUI1 family.

This chain is Protein translation factor SUI1 homolog, found in Cenarchaeum symbiosum (strain A).